Reading from the N-terminus, the 504-residue chain is Sucrose phosphorylase (504 aa).

Residue Asp50 participates in substrate binding. Sucrose contacts are provided by residues His88, 190-192, Glu232, 289-290, 342-345, and Arg399; these read RLD, HD, and DLYQ. Residue Asp192 is the Nucleophile of the active site. The active-site Proton donor is Glu232.

Belongs to the glycosyl hydrolase 13 family. Sucrose phosphorylase subfamily. Homodimer.

The catalysed reaction is sucrose + phosphate = D-fructose + alpha-D-glucose 1-phosphate. In terms of biological role, catalyzes the reversible phosphorolysis of sucrose into alpha-D-glucose 1-phosphate (Glc1P) and D-fructose. Is involved in sucrose degradation. Also displays transglucosylation activity in vitro, by transferring the glucosyl moiety of Glc1P to a broad range of monomeric sugars, such as D- and L-arabinose, D- and L-arabitol, and xylitol. The sequence is that of Sucrose phosphorylase from Bifidobacterium adolescentis (strain ATCC 15703 / DSM 20083 / NCTC 11814 / E194a).